The chain runs to 175 residues: MSILPIVTAPDERLKQKSQPVLEFTDQTRKFMDDMLKTMYHEDGAGLAAVQVGVLKRILVIDIQDHDSVARPKDFYPLFIVNPEIIEKAEELVTANEGCISLPEQRIEVARPESIKIRYLDYHGKSRELKANDWLARVIQHEYDHLEGKLMIDYLSNLKRDVVLRKLKKLKNNIV.

Positions 99 and 141 each coordinate Fe cation. Residue Glu142 is part of the active site. Position 145 (His145) interacts with Fe cation.

Belongs to the polypeptide deformylase family. Requires Fe(2+) as cofactor.

It catalyses the reaction N-terminal N-formyl-L-methionyl-[peptide] + H2O = N-terminal L-methionyl-[peptide] + formate. Its function is as follows. Removes the formyl group from the N-terminal Met of newly synthesized proteins. Requires at least a dipeptide for an efficient rate of reaction. N-terminal L-methionine is a prerequisite for activity but the enzyme has broad specificity at other positions. The sequence is that of Peptide deformylase 1 from Rickettsia conorii (strain ATCC VR-613 / Malish 7).